Consider the following 330-residue polypeptide: Thiosulfate transporter TsuA (330 aa).

Residues 1-2 lie on the Periplasmic side of the membrane; it reads MI. A helical transmembrane segment spans residues 3 to 18; the sequence is WTGLLVGFLFGIVLQR. Residues 19–36 lie on the Cytoplasmic side of the membrane; the sequence is GRICFNSAFRDVLLFKDN. The helical transmembrane segment at 37 to 59 threads the bilayer; sequence YLFKLAVFTLALEMILFVLLSQV. Topologically, residues 60–70 are periplasmic; that stretch reads GLMQMNPKPLN. The helical transmembrane segment at 71–87 threads the bilayer; the sequence is LVGNIIGGFVFGLGMVL. The Cytoplasmic segment spans residues 88–102; sequence AGGCASGVTYRVGEG. Residues 103–121 form a helical membrane-spanning segment; sequence LTTAWFAALFYGLGAYATK. At 122–162 the chain is on the periplasmic side; it reads SGAFSWWLSWVGQFKSPLSVEESAYYVKGAGPTISSVLGLN. The helical transmembrane segment at 163 to 180 threads the bilayer; it reads PWIPALVIAALFILWAFG. The Cytoplasmic portion of the chain corresponds to 181–189; that stretch reads TKTTSRETK. A helical membrane pass occupies residues 190–211; sequence FNWKIASVCLALVAGLGFITST. Residues 212–239 are Periplasmic-facing; that stretch reads LSGRKYGLGITGGWINLFQGFLTNSPLN. A helical transmembrane segment spans residues 240–258; sequence WEGLEIVGIILGAGVAAAV. Over 259–269 the chain is Cytoplasmic; that stretch reads AGEFKLRMPKN. A helical transmembrane segment spans residues 270–289; that stretch reads PVTYLQVGIGGLLMGIGAVT. Residues 290–306 are Periplasmic-facing; the sequence is AGGCNIGHFLTGVPQLA. A helical membrane pass occupies residues 307 to 326; the sequence is LSSWLASIFFILGNWTMAWI. Over 327-330 the chain is Cytoplasmic; it reads LFRR.

Belongs to the TsuA/YedE (TC 9.B.102) family.

It localises to the cell inner membrane. It catalyses the reaction thiosulfate(in) = thiosulfate(out). Its function is as follows. Mediates thiosulfate uptake. The polypeptide is Thiosulfate transporter TsuA (Spirochaeta thermophila (strain ATCC 700085 / DSM 6578 / Z-1203)).